A 245-amino-acid chain; its full sequence is Putative outer membrane protein RBE_0022 (245 aa).

The signal sequence occupies residues 1–23 (MIRMSKRLGVILFVSCISINSFA).

Belongs to the OmpW/AlkL family.

The protein resides in the cell outer membrane. In Rickettsia bellii (strain RML369-C), this protein is Putative outer membrane protein RBE_0022.